Consider the following 253-residue polypeptide: Ubiquinone biosynthesis O-methyltransferase (253 aa).

S-adenosyl-L-methionine contacts are provided by arginine 47, glycine 78, aspartate 99, and methionine 141.

This sequence belongs to the methyltransferase superfamily. UbiG/COQ3 family.

The enzyme catalyses a 3-demethylubiquinol + S-adenosyl-L-methionine = a ubiquinol + S-adenosyl-L-homocysteine + H(+). The catalysed reaction is a 3-(all-trans-polyprenyl)benzene-1,2-diol + S-adenosyl-L-methionine = a 2-methoxy-6-(all-trans-polyprenyl)phenol + S-adenosyl-L-homocysteine + H(+). Its pathway is cofactor biosynthesis; ubiquinone biosynthesis. In terms of biological role, O-methyltransferase that catalyzes the 2 O-methylation steps in the ubiquinone biosynthetic pathway. This Rhodopseudomonas palustris (strain BisA53) protein is Ubiquinone biosynthesis O-methyltransferase.